Here is a 374-residue protein sequence, read N- to C-terminus: Gustatory receptor 23a (374 aa).

Topologically, residues 1-6 (MFPPTR) are cytoplasmic. The helical transmembrane segment at 7-27 (VQASSRVVLKIFHFILVAFSL) threads the bilayer. The Extracellular portion of the chain corresponds to 28-36 (RSRRLSRLV). The helical transmembrane segment at 37-57 (LWLQFLGWLTWFISMWTQSVI) threads the bilayer. Topologically, residues 58–72 (YAQTIDCTLDCSLRH) are cytoplasmic. Residues 73–93 (ILTFFQTVSHAFIVVTSFLDG) form a helical membrane-spanning segment. Topologically, residues 94–112 (FRIKQDQLDEPIAFEDSDP) are extracellular. A helical membrane pass occupies residues 113-133 (WLAFTVLAMLVPTLGVEYLVC). The Cytoplasmic portion of the chain corresponds to 134–226 (SNAPEYAFRI…YNDLHYLFVR (93 aa)). The helical transmembrane segment at 227–247 (INGYFGGSLLTIIIVHFAIFV) threads the bilayer. The Extracellular segment spans residues 248 to 263 (SNSYWLFVDIRTRPWR). Residues 264–284 (IYAILLNLGFIFNVALQMAAA) traverse the membrane as a helical segment. The Cytoplasmic segment spans residues 285–343 (CWHCQQSYNLGRQIGCLISKLVKPQGSKLYNDLVSEFSLQTLHQRFVVTAKDFFSLNLH). Residues 344-364 (LLSSMFAAVVTYLVILIQFMF) traverse the membrane as a helical segment. The Extracellular segment spans residues 365–374 (AERSSTRGSG).

The protein belongs to the insect chemoreceptor superfamily. Gustatory receptor (GR) family. Gr2a subfamily. As to expression, expressed in the adult labellar chemosensory neurons and labral sense organ. Expressed in neurons of the dorsal pharyngeal sense organ of larvae.

It is found in the cell membrane. Probable gustatory receptor which mediates acceptance or avoidance behavior, depending on its substrates. The sequence is that of Gustatory receptor 23a (Gr23a) from Drosophila melanogaster (Fruit fly).